A 497-amino-acid polypeptide reads, in one-letter code: O-acetyltransferase PaAT-1 (497 aa).

Asn-35 carries N-linked (GlcNAc...) asparagine glycosylation. 9 helical membrane-spanning segments follow: residues Gly-69–Ile-89, Leu-107–Ser-127, Leu-157–Tyr-177, Leu-241–Phe-261, Val-278–Ile-298, Ala-329–Phe-349, Pro-375–Phe-395, Ile-406–Gly-426, and Val-443–Val-463.

The protein belongs to the acyltransferase 3 family.

Its subcellular location is the membrane. The protein operates within mycotoxin biosynthesis. Functionally, O-acetyltransferase; part of the 2 gene clusters that mediate the biosynthesis of fusicoccins, diterpene glucosides that display phytohormone-like activity and function as potent activators of plasma membrane H(+)-ATPases in plants by modifying 14-3-3 proteins and cause the plant disease constriction canker. The first step in the pathway is performed by the fusicoccadiene synthase PaFS that possesses both prenyl transferase and terpene cyclase activity, converting isopentenyl diphosphate and dimethylallyl diphosphate into geranylgeranyl diphosphate (GGDP) and successively converting GGDP into fusicocca-2,10(14)-diene, a precursor for fusicoccin H. The second step is the oxidation at the C-8 position by the cytochrome P450 monooxygenase PaP450-2 to yield fusicocca-2,10(14)-diene-8-beta-ol. The cytochrome P450 monooxygenase PaP450-1 then catalyzes the hydroxylation at the C-16 position to produce fusicocca-2,10(14)-diene-8-beta,16-diol. The dioxygenase fc-dox then catalyzes the 16-oxydation of fusicocca-2,10(14)-diene-8-beta,16-diol to yield an aldehyde (8-beta-hydroxyfusicocca-1,10(14)-dien-16-al). The short-chain dehydrogenase/reductase fc-sdr catalyzes the reduction of the aldehyde to yield fusicocca-1,10(14)-diene-8-beta,16-diol. The next step is the hydroxylation at C-9 performed by the cytochrome P450 monooxygenase PaP450-3 that leads to fusicoccin H aglycon which is glycosylated to fusicoccin H by the O-glycosyltransferase PaGT. Hydroxylation at C-12 by the cytochrome P450 monooxygenase PaP450-4 leads then to the production of fusicoccin Q and is followed by methylation by the O-methyltransferase PaMT to yield fusicoccin P. Fusicoccin P is further converted to fusicoccin J via prenylation by the O-glucose prenyltransferase PaPT. Cytochrome P450 monooxygenase PaP450-5 then performs hydroxylation at C-19 to yield dideacetyl-fusicoccin A which is acetylated to 3'-O-deacetyl-fusicoccin A by the O-acetyltransferase PaAT-2. Finally, a another acetylation by the O-acetyltransferase PaAT-1 yields fusicoccin A. The polypeptide is O-acetyltransferase PaAT-1 (Phomopsis amygdali (Fusicoccum amygdali)).